We begin with the raw amino-acid sequence, 187 residues long: Elongation factor P (187 aa).

The protein belongs to the elongation factor P family.

Its subcellular location is the cytoplasm. It functions in the pathway protein biosynthesis; polypeptide chain elongation. Its function is as follows. Involved in peptide bond synthesis. Stimulates efficient translation and peptide-bond synthesis on native or reconstituted 70S ribosomes in vitro. Probably functions indirectly by altering the affinity of the ribosome for aminoacyl-tRNA, thus increasing their reactivity as acceptors for peptidyl transferase. This is Elongation factor P from Erythrobacter litoralis (strain HTCC2594).